The following is a 290-amino-acid chain: MLDKVKREVFFVARLLVVLYLSTLLLISYENVNYIAVGILSVYFLINVYVYFFSKPRILQLISPFLDIILVPAFVFFSKILYSIYALGVLISVYAWRKPVLAGIILLETYGLAFFYFSGHYLLMISHFILFLALFFTSYNFEYATVVGKERKRILKLKKNYHKLLKEFSNFEREKRMFSNLRKILKLLRESKEPKDYFEGLKREFNVKRISVIPVNEVEGEEVFDYDKGTLSVFVKLDRGYAKVVYELDPPFRLRDPVLIQALVEGAKLLSLYVEGFEESAEGKQVLVVG.

5 helical membrane-spanning segments follow: residues 10–27 (FFVARLLVVLYLSTLLLI), 32–54 (VNYIAVGILSVYFLINVYVYFFS), 69–91 (ILVPAFVFFSKILYSIYALGVLI), 100–117 (VLAGIILLETYGLAFFYF), and 121–143 (YLLMISHFILFLALFFTSYNFEY). Residues 147 to 183 (VGKERKRILKLKKNYHKLLKEFSNFEREKRMFSNLRK) adopt a coiled-coil conformation.

Its subcellular location is the cell membrane. This is an uncharacterized protein from Aquifex aeolicus (strain VF5).